The following is a 206-amino-acid chain: Ras-related protein Rab-7a (206 aa).

15-22 serves as a coordination point for GTP; that stretch reads GDSGVGKT. Residues Ser-17 and Ser-23 each carry the phosphoserine modification. A phosphothreonine mark is found at Thr-34, Thr-40, and Thr-64. GTP-binding positions include 34–40 and 63–67; these read TQQYRAT and DTAGQ. The Effector region motif lies at 37-45; it reads YRATVGADF. Phosphoserine is present on Ser-72. A phosphotyrosine mark is found at Tyr-78 and Tyr-88. GTP contacts are provided by residues 125–128 and 157–158; these read NKLD and AK. Residues Cys-205 and Cys-206 are each lipidated (S-geranylgeranyl cysteine).

The protein belongs to the small GTPase superfamily. Rab family.

It is found in the cytoplasmic vesicle. The protein resides in the phagosome membrane. Its subcellular location is the late endosome membrane. It localises to the lysosome membrane. The protein localises to the autophagosome membrane. It is found in the lipid droplet. It carries out the reaction GTP + H2O = GDP + phosphate + H(+). Functionally, small GTPase which cycles between active GTP-bound and inactive GDP-bound states. In its active state, binds to a variety of effector proteins playing a key role in the regulation of endo-lysosomal trafficking. Governs early-to-late endosomal maturation, microtubule minus-end as well as plus-end directed endosomal migration and positioning, and endosome-lysosome transport through different protein-protein interaction cascades. Involved in lipophagy, a cytosolic lipase-independent autophagic pathway. Plays a role in phagocyte formation and acidification. This is Ras-related protein Rab-7a from Paramecium octaurelia.